The following is a 158-amino-acid chain: SsrA-binding protein (158 aa).

Residues 135-158 are disordered; it reads DKRKTLKDRDWERDKQRGFKKDLD. Basic and acidic residues predominate over residues 141–158; that stretch reads KDRDWERDKQRGFKKDLD.

The protein belongs to the SmpB family.

Its subcellular location is the cytoplasm. In terms of biological role, required for rescue of stalled ribosomes mediated by trans-translation. Binds to transfer-messenger RNA (tmRNA), required for stable association of tmRNA with ribosomes. tmRNA and SmpB together mimic tRNA shape, replacing the anticodon stem-loop with SmpB. tmRNA is encoded by the ssrA gene; the 2 termini fold to resemble tRNA(Ala) and it encodes a 'tag peptide', a short internal open reading frame. During trans-translation Ala-aminoacylated tmRNA acts like a tRNA, entering the A-site of stalled ribosomes, displacing the stalled mRNA. The ribosome then switches to translate the ORF on the tmRNA; the nascent peptide is terminated with the 'tag peptide' encoded by the tmRNA and targeted for degradation. The ribosome is freed to recommence translation, which seems to be the essential function of trans-translation. The polypeptide is SsrA-binding protein (Psychrobacter arcticus (strain DSM 17307 / VKM B-2377 / 273-4)).